We begin with the raw amino-acid sequence, 310 residues long: Transcription factor LRL2 (310 aa).

Composition is skewed to low complexity over residues 1–20 and 104–126; these read MNSS…LQSP and QTQT…QPQT. Disordered regions lie at residues 1–23 and 95–143; these read MNSS…PATF and FHLP…PHSI. The interval 136-149 is basic motif; degenerate; that stretch reads QATDPHSIAERLRR. Positions 136 to 185 constitute a bHLH domain; the sequence is QATDPHSIAERLRRERIAERMKSLQELVPNGNKTDKASMLDEIIDYVKFL. The helix-loop-helix motif stretch occupies residues 150-185; sequence ERIAERMKSLQELVPNGNKTDKASMLDEIIDYVKFL. The disordered stretch occupies residues 203–225; the sequence is ASSQISEDAGGSHENTSSSGEAK.

As to quaternary structure, homodimer. Expressed constitutively in roots, leaves, stems, and flowers.

The protein resides in the nucleus. Transcription factor that regulates the development of root hairs. Transcription factor that regulates the development of sperm cells. This chain is Transcription factor LRL2, found in Arabidopsis thaliana (Mouse-ear cress).